A 1276-amino-acid polypeptide reads, in one-letter code: cGMP-specific 3',5'-cyclic phosphodiesterase (1276 aa).

Disordered regions lie at residues 1 to 76 (MHEL…TAAG), 91 to 185 (NQVK…QQDV), and 241 to 260 (ASPTVQQKSPRSLSNSSASS). 2 stretches are compositionally biased toward low complexity: residues 12–47 (SSSSSSSSSSNMTDVSAAAGGATAPAETAATSSSAS) and 57–76 (TSTAMAAPTTTPTTAATAAG). Over residues 109 to 124 (APYPPVPAAKPKPTPT) the composition is skewed to pro residues. Over residues 129 to 140 (SKFKSTSREVDV) the composition is skewed to basic and acidic residues. A compositionally biased stretch (polar residues) spans 147–166 (ARSSTISPGVSIHTQTIQQE). Low complexity-rich tracts occupy residues 167–180 (SSSAKPGMSSSSSS) and 249–260 (SPRSLSNSSASS). GAF domains are found at residues 290–442 (DIDV…GIGI) and 474–658 (NLEC…GLGI). The PDEase domain maps to 688 to 1119 (SQDQTEKLTQ…RNWQDLAEKV (432 aa)). His764 serves as the catalytic Proton donor. Residues His768, His804, Asp805, and Asp1023 each contribute to the a divalent metal cation site. Disordered stretches follow at residues 1162–1193 (AQHGAGAGGDDSHTPEHQRSGSRLSMKKTGAL) and 1205–1276 (LYNS…CSLL). Basic and acidic residues-rich tracts occupy residues 1171-1180 (DDSHTPEHQR) and 1221-1233 (LESHVSEDMDDKS). Positions 1248–1263 (GRMSASSSTSSAGTVV) are enriched in low complexity. The span at 1266–1276 (SKKRSKLCSLL) shows a compositional bias: basic residues. Cys1273 is subject to Cysteine methyl ester. Cys1273 carries S-farnesyl cysteine lipidation. Residues 1274-1276 (SLL) constitute a propeptide, removed in mature form.

Belongs to the cyclic nucleotide phosphodiesterase family. In terms of assembly, interacts with PrBP. A divalent metal cation serves as cofactor.

The protein localises to the cell membrane. It carries out the reaction 3',5'-cyclic GMP + H2O = GMP + H(+). Its function is as follows. Has a role regulating cGMP transport in Malpighian tubule principal cells. The chain is cGMP-specific 3',5'-cyclic phosphodiesterase from Drosophila persimilis (Fruit fly).